Here is a 242-residue protein sequence, read N- to C-terminus: MEGWQRAFVLHSRPWSETSLMLDVFTEESGRVRLVAKGARSKRSNLKGALQPFTPLLLRYSGRGEVKTLRSAEAVSLALPLSGITLYSGLYINELLSRVLEYETRFSELFFDYLNCIQALAGTTGSPEPALRRFELALLGHLGYGVNFTHCAGSGERVDDTMTYRYREEKGFFASVVIDNNTFTGRHLKALEEREFPDVDTLRAAKRFTRMALKPYLGGKPLKSRELFRQFMPKRTVKMKKD.

This sequence belongs to the RecO family. Monomer.

In terms of biological role, involved in DNA repair and RecF pathway recombination. This Salmonella enteritidis PT4 (strain P125109) protein is DNA repair protein RecO.